The sequence spans 273 residues: Shikimate dehydrogenase (NADP(+)) (273 aa).

Shikimate is bound by residues 14–16 and threonine 61; that span reads SKS. Residue lysine 65 is the Proton acceptor of the active site. Residues asparagine 86 and aspartate 102 each contribute to the shikimate site. Residues 126 to 130, 150 to 155, and methionine 213 contribute to the NADP(+) site; these read GAGGA and NRTHAK. Position 215 (tyrosine 215) interacts with shikimate. Glycine 237 is an NADP(+) binding site.

This sequence belongs to the shikimate dehydrogenase family. In terms of assembly, homodimer.

It catalyses the reaction shikimate + NADP(+) = 3-dehydroshikimate + NADPH + H(+). It functions in the pathway metabolic intermediate biosynthesis; chorismate biosynthesis; chorismate from D-erythrose 4-phosphate and phosphoenolpyruvate: step 4/7. Involved in the biosynthesis of the chorismate, which leads to the biosynthesis of aromatic amino acids. Catalyzes the reversible NADPH linked reduction of 3-dehydroshikimate (DHSA) to yield shikimate (SA). The chain is Shikimate dehydrogenase (NADP(+)) from Aeromonas salmonicida (strain A449).